The sequence spans 233 residues: Putative N-acetylmannosamine-6-phosphate 2-epimerase (233 aa).

This sequence belongs to the NanE family.

The catalysed reaction is an N-acyl-D-glucosamine 6-phosphate = an N-acyl-D-mannosamine 6-phosphate. It functions in the pathway amino-sugar metabolism; N-acetylneuraminate degradation; D-fructose 6-phosphate from N-acetylneuraminate: step 3/5. Converts N-acetylmannosamine-6-phosphate (ManNAc-6-P) to N-acetylglucosamine-6-phosphate (GlcNAc-6-P). The protein is Putative N-acetylmannosamine-6-phosphate 2-epimerase of Yersinia pseudotuberculosis serotype IB (strain PB1/+).